The chain runs to 396 residues: Elongation factor Tu (396 aa).

Residues Lys10–Glu206 enclose the tr-type G domain. A G1 region spans residues Gly19–Thr26. GTP is bound at residue Gly19 to Thr26. Thr26 is a binding site for Mg(2+). The G2 stretch occupies residues Gly60 to Ser64. Positions Asp81–Gly84 are G3. GTP-binding positions include Asp81–His85 and Asn136–Asp139. Positions Asn136 to Asp139 are G4. The tract at residues Ser174 to Leu176 is G5.

The protein belongs to the TRAFAC class translation factor GTPase superfamily. Classic translation factor GTPase family. EF-Tu/EF-1A subfamily. Monomer.

The protein resides in the cytoplasm. The catalysed reaction is GTP + H2O = GDP + phosphate + H(+). Functionally, GTP hydrolase that promotes the GTP-dependent binding of aminoacyl-tRNA to the A-site of ribosomes during protein biosynthesis. The protein is Elongation factor Tu of Gluconobacter oxydans (strain 621H) (Gluconobacter suboxydans).